A 167-amino-acid polypeptide reads, in one-letter code: Probable membrane-bound hydrogenase subunit mbhJ (167 aa).

Cys35, Cys38, Cys102, and Cys132 together coordinate [4Fe-4S] cluster.

This sequence belongs to the complex I 20 kDa subunit family. In terms of assembly, the membrane-bound hydrogenase complex is composed of MbhK and MbhL, but may also contain MbhJ. Requires [4Fe-4S] cluster as cofactor.

The protein localises to the cell membrane. The enzyme catalyses H2 + 2 oxidized [2Fe-2S]-[ferredoxin] = 2 reduced [2Fe-2S]-[ferredoxin] + 2 H(+). Its activity is regulated as follows. Inhibited by 0.1 mM Cu(2+). In terms of biological role, probable subunit of a hydrogen-evolving hydrogenase that utilizes protons both as a substrate for hydrogen production and proton translocation. Acts by coupling the redox reaction via ferredoxin and iron-sulfur (Fe-S) clusters to proton translocation across the membrane, thereby conserving the redox energy in a proton gradient. The sequence is that of Probable membrane-bound hydrogenase subunit mbhJ from Pyrococcus furiosus (strain ATCC 43587 / DSM 3638 / JCM 8422 / Vc1).